A 196-amino-acid chain; its full sequence is Carnitine operon protein CaiE (196 aa).

Positions 173 to 196 (TQPLRQMEENRPRLQGTTDVTPKR) are disordered. Residues 187-196 (QGTTDVTPKR) show a composition bias toward polar residues.

This sequence belongs to the transferase hexapeptide repeat family.

It participates in amine and polyamine metabolism; carnitine metabolism. Its function is as follows. Overproduction of CaiE stimulates the activity of CaiB and CaiD. The polypeptide is Carnitine operon protein CaiE (Escherichia coli O6:K15:H31 (strain 536 / UPEC)).